The following is a 172-amino-acid chain: 16S rRNA aminocarboxypropyltransferase (172 aa).

Residues T21, L71, L93, and T112 each coordinate S-adenosyl-L-methionine.

This sequence belongs to the TDD superfamily. TSR3 family.

The protein localises to the cytoplasm. It carries out the reaction an N(1)-methylpseudouridine in rRNA + S-adenosyl-L-methionine = N(1)-methyl-N(3)-[(3S)-3-amino-3-carboxypropyl]pseudouridine in rRNA + S-methyl-5'-thioadenosine + H(+). Its function is as follows. Aminocarboxypropyltransferase that catalyzes the aminocarboxypropyl transfer on pseudouridine at position 914 in 16S rRNA. It constitutes the last step in biosynthesis of the hypermodified N1-methyl-N3-(3-amino-3-carboxypropyl) pseudouridine (m1acp3-Psi). This is 16S rRNA aminocarboxypropyltransferase from Methanocaldococcus jannaschii (strain ATCC 43067 / DSM 2661 / JAL-1 / JCM 10045 / NBRC 100440) (Methanococcus jannaschii).